The primary structure comprises 727 residues: Alpha-1,3-galactosidase A (727 aa).

Positions 220–241 (ATNRTWRTSNPVFPERHEDHRP) are disordered. The segment covering 221–230 (TNRTWRTSNP) has biased composition (polar residues). 6 PbH1 repeats span residues 336 to 358 (KGTVRITNSVFDNPQDDPINIHG), 461 to 483 (TPTVEITGNTFQAVPTRGILVTT), 484 to 506 (RRPVRIENNRFDGMSMASIYISS), 517 to 538 (VRNVTIRGNVFDRPASPVIFFD), 551 to 572 (HRNVLIEDNDFNLTGGTILSGR), and 574 to 603 (VGGLTFRDNRVERYPHLRLTGPSRALRVGD).

This sequence belongs to the glycosyl hydrolase 110 family. A subfamily.

It catalyses the reaction Hydrolysis of terminal, non-reducing branched (1-&gt;3)-alpha-D-galactosidic residues, producing free D-galactose.. It carries out the reaction Hydrolysis of terminal, non-reducing alpha-D-galactose residues in alpha-D-galactosides, including galactose oligosaccharides, galactomannans and galactolipids.. Alpha-galactosidase that specifically removes branched alpha-1,3-linked galactose residues present in blood group B antigens. Has no activity toward linear alpha-1,3-linked galactose residues. The polypeptide is Alpha-1,3-galactosidase A (glaA) (Peterkaempfera griseoplana (Streptacidiphilus griseoplanus)).